A 208-amino-acid polypeptide reads, in one-letter code: MPGRERRDGGRSADDNQKKNDRRGGRRDDRRNQQQDERSQYIERVVTINRVSKVVKGGRRFSFTALVIVGDGKGMVGVGYGKAKEVPAAIQKGAEEARKNFFRVPMVAGTITHPVQGEAAAGIVMMRPAAPGTGVIAGGAARPVLECAGVQDILCKSLGSDNAINVVHATVAGLKQLNRPEEVAARRGKTLEEVAPARMLRARAGQEA.

Residues 1–38 (MPGRERRDGGRSADDNQKKNDRRGGRRDDRRNQQQDER) are disordered. One can recognise an S5 DRBM domain in the interval 41–104 (YIERVVTINR…EEARKNFFRV (64 aa)).

Belongs to the universal ribosomal protein uS5 family. As to quaternary structure, part of the 30S ribosomal subunit. Contacts proteins S4 and S8.

With S4 and S12 plays an important role in translational accuracy. In terms of biological role, located at the back of the 30S subunit body where it stabilizes the conformation of the head with respect to the body. The polypeptide is Small ribosomal subunit protein uS5 (Corynebacterium diphtheriae (strain ATCC 700971 / NCTC 13129 / Biotype gravis)).